The primary structure comprises 847 residues: Endo-beta-N-acetylglucosaminidase EndoSd (847 aa).

Positions 1 to 36 (MDKRLLVKRTLGCVCAATLMGAILATHHDSLISVKA) are cleaved as a signal peptide. In terms of domain architecture, GH18 spans 65–377 (PLYAGYFRTW…HPVVDNISHT (313 aa)). Residue His-107 participates in a glycoprotein binding. Residue Glu-186 is the Proton donor of the active site. Residues Glu-188, Gln-250, Tyr-252, Glu-288, Glu-289, Asn-295, and Tyr-339 each coordinate a glycoprotein. 4 LRR repeats span residues 423-446 (LERY…LEKL), 447-470 (SHLQ…ILPE), 483-506 (MTGL…DVNG), and 507-530 (LTHL…ADRK). The carbohydrate-binding module (CBM) stretch occupies residues 683 to 836 (MENLAKGAKV…YTELQILGQR (154 aa)). Ca(2+)-binding residues include Lys-704, Asp-707, and Glu-829.

Belongs to the glycosyl hydrolase 18 family.

It localises to the secreted. Its subcellular location is the host extracellular space. It catalyses the reaction an N(4)-(oligosaccharide-(1-&gt;3)-[oligosaccharide-(1-&gt;6)]-beta-D-Man-(1-&gt;4)-beta-D-GlcNAc-(1-&gt;4)-alpha-D-GlcNAc)-L-asparaginyl-[protein] + H2O = an oligosaccharide-(1-&gt;3)-[oligosaccharide-(1-&gt;6)]-beta-D-Man-(1-&gt;4)-D-GlcNAc + N(4)-(N-acetyl-beta-D-glucosaminyl)-L-asparaginyl-[protein]. Its function is as follows. Endoglucosidase that acts as a host immune evasion factor by mediating hydrolysis of the N-linked glycan from the Fc region of host immunoglobulin-gamma (IgG) during infection. Specifically catalyzes the hydrolysis of the beta-1,4 linkage between the first two N-acetylglucosamine residues of the complex-type N-linked glycan located on 'Asn-297' of the Fc region of IgG antibodies (IGHG1, IGHG2, IGHG3 or IGHG4), thereby preventing interaction between IgGs and Fc receptors and ability to activate the complement pathway. Shows a specificity for biantennary complex type N-glycans; does neither cleave larger complex type glycans nor oligomannose and nor hybrid-type glycans. Specifically acts on IgGs; does not act on immunoglobulin alpha, beta, delta or mu. The sequence is that of Endo-beta-N-acetylglucosaminidase EndoSd from Streptococcus dysgalactiae.